The following is a 1193-amino-acid chain: Structural maintenance of chromosomes protein 3 homolog (1193 aa).

31-38 serves as a coordination point for ATP; the sequence is GFNGSGKS. Lys101 bears the N6-acetyllysine mark. Coiled-coil stretches lie at residues 179–286 and 332–483; these read SKKV…LNKT and ILRV…EIIK. The SMC hinge domain occupies 505–631; that stretch reads ENILGFLIDN…VKSLESCENY (127 aa). A coiled-coil region spans residues 665–993; that stretch reads TVYNKLKELK…SHKNIKDMIQ (329 aa).

The protein belongs to the SMC family. SMC3 subfamily. In terms of assembly, component of the cohesin complex. Acetylation at Lys-101 by ESCO1 is important for genome stability and S phase sister chromatid cohesion.

It is found in the nucleus. In terms of biological role, central component of cohesin, a complex required for chromosome cohesion during the cell cycle. The cohesin complex may form a large proteinaceous ring within which sister chromatids can be trapped. At anaphase, the complex is cleaved and dissociates from chromatin, allowing sister chromatids to segregate. Cohesion is coupled to DNA replication and is involved in DNA repair. The cohesin complex also plays an important role in spindle pole assembly during mitosis and in chromosomes movement. This is Structural maintenance of chromosomes protein 3 homolog from Plasmodium falciparum (isolate 3D7).